The sequence spans 360 residues: Phospho-N-acetylmuramoyl-pentapeptide-transferase (360 aa).

A run of 10 helical transmembrane segments spans residues 21–41 (YVTF…LWWG), 74–94 (MGGL…GDLG), 97–117 (YVWV…IDDY), 135–155 (LLQS…ADTA), 168–188 (VMPQ…VGSS), 199–219 (GLAI…AYLS), 236–256 (AGEL…FLWF), 263–283 (VFMG…IAVL), 288–308 (ILLV…ILQV), and 338–358 (VIVR…ATLK).

The protein belongs to the glycosyltransferase 4 family. MraY subfamily. It depends on Mg(2+) as a cofactor.

Its subcellular location is the cell inner membrane. The enzyme catalyses UDP-N-acetyl-alpha-D-muramoyl-L-alanyl-gamma-D-glutamyl-meso-2,6-diaminopimeloyl-D-alanyl-D-alanine + di-trans,octa-cis-undecaprenyl phosphate = di-trans,octa-cis-undecaprenyl diphospho-N-acetyl-alpha-D-muramoyl-L-alanyl-D-glutamyl-meso-2,6-diaminopimeloyl-D-alanyl-D-alanine + UMP. It functions in the pathway cell wall biogenesis; peptidoglycan biosynthesis. Functionally, catalyzes the initial step of the lipid cycle reactions in the biosynthesis of the cell wall peptidoglycan: transfers peptidoglycan precursor phospho-MurNAc-pentapeptide from UDP-MurNAc-pentapeptide onto the lipid carrier undecaprenyl phosphate, yielding undecaprenyl-pyrophosphoryl-MurNAc-pentapeptide, known as lipid I. The protein is Phospho-N-acetylmuramoyl-pentapeptide-transferase of Shewanella piezotolerans (strain WP3 / JCM 13877).